The primary structure comprises 291 residues: 29 kDa ribonucleoprotein B, chloroplastic (291 aa).

The RRM 1 domain occupies 87–165 (LKLFVGNLPF…RAIRVNAGPA (79 aa)). Residues 164–202 (PAPAKRENSSFGGGRGGNSSYGGGRDGNSSFGGARGGRS) form a disordered region. The linker (Gly-rich) stretch occupies residues 166–206 (PAKRENSSFGGGRGGNSSYGGGRDGNSSFGGARGGRSVDSS). Residues 174–189 (FGGGRGGNSSYGGGRD) show a composition bias toward gly residues. Positions 207-285 (NRVYVGNLSW…RSIRVSAAEE (79 aa)) constitute an RRM 2 domain.

The protein resides in the plastid. Its subcellular location is the chloroplast. In terms of biological role, could be involved in splicing and/or processing of chloroplast RNA's. The protein is 29 kDa ribonucleoprotein B, chloroplastic of Nicotiana sylvestris (Wood tobacco).